A 526-amino-acid polypeptide reads, in one-letter code: Probable feruloyl esterase B-1 (526 aa).

A signal peptide spans 1-19 (MPSLRRLLPFLAAGSAALA). 2 disulfides stabilise this stretch: C28/C75 and C63/C114. N-linked (GlcNAc...) asparagine glycans are attached at residues N53, N85, N98, and N138. Intrachain disulfides connect C187–C441, C256–C273, and C282–C291. The active-site Acyl-ester intermediate is S188. N-linked (GlcNAc...) asparagine glycosylation is present at N246. Positions 257, 260, 262, 264, and 266 each coordinate Ca(2+). N-linked (GlcNAc...) asparagine glycosylation is found at N287 and N311. Active-site charge relay system residues include D400 and H440. 2 N-linked (GlcNAc...) asparagine glycosylation sites follow: N490 and N516. A disulfide bond links C503 and C525.

The protein belongs to the tannase family.

It is found in the secreted. It catalyses the reaction feruloyl-polysaccharide + H2O = ferulate + polysaccharide.. Involved in degradation of plant cell walls. Hydrolyzes the feruloyl-arabinose ester bond in arabinoxylans as well as the feruloyl-galactose and feruloyl-arabinose ester bonds in pectin. The polypeptide is Probable feruloyl esterase B-1 (faeB-1) (Aspergillus flavus (strain ATCC 200026 / FGSC A1120 / IAM 13836 / NRRL 3357 / JCM 12722 / SRRC 167)).